We begin with the raw amino-acid sequence, 581 residues long: Kelch-like protein 38 (581 aa).

In terms of domain architecture, BTB spans 34–101 (TDVSICAGAR…VYTGEAHIAT (68 aa)). One can recognise a BACK domain in the interval 136–237 (CLGMIRLSEI…HPAFFHHFIA (102 aa)). 6 Kelch repeats span residues 285 to 332 (FLIL…TLHR), 334 to 383 (IYVL…AHKN), 384 to 431 (FIFS…VKDQ), 433 to 479 (LYLF…VLGE), 480 to 521 (RIVI…VMGN), and 523 to 573 (LYVT…TLQC).

The chain is Kelch-like protein 38 (KLHL38) from Homo sapiens (Human).